Reading from the N-terminus, the 517-residue chain is Ascochitine biosynthesis cluster MFS transporter (517 aa).

Basic and acidic residues predominate over residues 1–12; it reads MSPDSRDPEAQR. The segment at 1 to 45 is disordered; the sequence is MSPDSRDPEAQRDVGLTKNTSSVNIPLESVKTDKTSNASPIMGPG. Residue Asn19 is glycosylated (N-linked (GlcNAc...) asparagine). 12 helical membrane-spanning segments follow: residues 75–95, 111–131, 141–161, 172–192, 204–224, 232–252, 308–328, 347–367, 390–410, 421–441, 457–475, and 485–505; these read WVITWLLSFLNVWVTFSSTIF, VVMTLGVSLTVLGFAVGPLIW, LTPFYFGYAVFCIFQIPVGVA, FFIGFFGTSAMAVTPGVLADI, VYAAAAFIGPIFGPIVGGFVV, WTAWITLILASAFGLAALVFV, ILLLVTLYISLVYGVLYLFFV, ALPLLAVMLGTLAGCLTILFV, LMMVGSVSLPIGLFWFGWTSS, AGFPIGIGLALIWVQGLSFLI, LIRSAVGAAFPLFGAPMYH, and LLGFLSVAMIPIPVAFYYYGP.

Belongs to the major facilitator superfamily. CAR1 family.

Its subcellular location is the membrane. Its function is as follows. MFS transporter; part of the gene cluster that mediates the biosynthesis the mycotoxin ascochitine, an o-quinone methide that plays a possible protective role against other microbial competitors in nature and is considered to be important for pathogenicity of legume-associated Didymella species. The protein is Ascochitine biosynthesis cluster MFS transporter of Didymella fabae (Leaf and pod spot disease fungus).